A 714-amino-acid chain; its full sequence is Polynucleotide 5'-hydroxyl-kinase NOL9 (714 aa).

Position 2 is an N-acetylalanine (Ala2). Residues 31–47 (RRGRRRFGVLTRVELRR) carry the Nucleolar localization signal motif. Residues 80 to 133 (ARSRPAPRSPPTPSVPPAPCTASATCSLLNPRNHSTPQSRAGRPVRKVSPNVTQ) are disordered. Residues 86-98 (PRSPPTPSVPPAP) show a composition bias toward pro residues. Polar residues predominate over residues 107–118 (LLNPRNHSTPQS). Residue Ser128 is modified to Phosphoserine. 322 to 329 (GACDIGKS) provides a ligand contact to ATP. The interaction with LAS1L stretch occupies residues 495-714 (FTYEEKESSP…PRHKLRQRRK (220 aa)). Lys500 participates in a covalent cross-link: Glycyl lysine isopeptide (Lys-Gly) (interchain with G-Cter in SUMO2). Ser502 carries the post-translational modification Phosphoserine.

This sequence belongs to the Clp1 family. NOL9/GRC3 subfamily. Interacts with PELP1, WDR18 and SENP3. Interacts with LAS1L to form an ITS2 pre-rRNA endonuclease-kinase complex.

The protein localises to the nucleus. The protein resides in the nucleolus. The catalysed reaction is a 5'-end dephospho-2'-deoxyribonucleoside-DNA + ATP = a 5'-end 5'-phospho-2'-deoxyribonucleoside-DNA + ADP + H(+). It catalyses the reaction a 5'-end dephospho-ribonucleoside-RNA + ATP = a 5'-end 5'-phospho-ribonucleoside-RNA + ADP + H(+). Functionally, polynucleotide kinase that can phosphorylate the 5'-hydroxyl groups of single-stranded and double-stranded RNA and DNA substrates. Involved in rRNA processing and its kinase activity is required for the processing of the 32S precursor into 5.8S and 28S rRNAs, more specifically for the generation of the major 5.8S(S) form. Required for the efficient pre-rRNA processing of internal transcribed spacer 2 (ITS2). Associates with LAS1L to form an ITS2 pre-rRNA endonuclease-kinase complex and is responsible for the transport of this complex into the nucleolus. This Mus musculus (Mouse) protein is Polynucleotide 5'-hydroxyl-kinase NOL9.